A 181-amino-acid chain; its full sequence is ABC transporter E family member 3 (181 aa).

Positions S20–G176 constitute an ABC transporter domain. G27–T34 contacts ATP.

The protein belongs to the ABC transporter superfamily. ABCE family. In terms of tissue distribution, mostly expressed in roots and leaves, and, to a lower extent, in stems, flowers and siliques.

The polypeptide is ABC transporter E family member 3 (ABCE3) (Arabidopsis thaliana (Mouse-ear cress)).